We begin with the raw amino-acid sequence, 266 residues long: 4-hydroxy-tetrahydrodipicolinate reductase (266 aa).

10–15 (GPRGRM) lines the NAD(+) pocket. K38 contacts NADP(+). Residues 99 to 101 (GTT) and 125 to 128 (APNF) each bind NAD(+). H155 serves as the catalytic Proton donor/acceptor. H156 provides a ligand contact to (S)-2,3,4,5-tetrahydrodipicolinate. Residue K159 is the Proton donor of the active site. 165–166 (GT) contacts (S)-2,3,4,5-tetrahydrodipicolinate.

This sequence belongs to the DapB family.

Its subcellular location is the cytoplasm. The enzyme catalyses (S)-2,3,4,5-tetrahydrodipicolinate + NAD(+) + H2O = (2S,4S)-4-hydroxy-2,3,4,5-tetrahydrodipicolinate + NADH + H(+). The catalysed reaction is (S)-2,3,4,5-tetrahydrodipicolinate + NADP(+) + H2O = (2S,4S)-4-hydroxy-2,3,4,5-tetrahydrodipicolinate + NADPH + H(+). It participates in amino-acid biosynthesis; L-lysine biosynthesis via DAP pathway; (S)-tetrahydrodipicolinate from L-aspartate: step 4/4. Catalyzes the conversion of 4-hydroxy-tetrahydrodipicolinate (HTPA) to tetrahydrodipicolinate. This chain is 4-hydroxy-tetrahydrodipicolinate reductase, found in Bacillus anthracis (strain A0248).